Here is a 189-residue protein sequence, read N- to C-terminus: Alanine and glycine-rich protein (189 aa).

Positions A127–G160 are enriched in gly residues. The tract at residues A127–R170 is disordered.

As to expression, component of the organic matrix of calcified shell layers like nacre and prisms.

Its subcellular location is the secreted. In Mytilus californianus (California mussel), this protein is Alanine and glycine-rich protein.